Here is a 233-residue protein sequence, read N- to C-terminus: Protein DEHYDRATION-INDUCED 19 homolog 2 (233 aa).

The interval 176–215 (DLHSDSSDNNFLLNKFPDDKTAERAEPSLSEKDQKERAQR) is disordered. Over residues 191-214 (FPDDKTAERAEPSLSEKDQKERAQ) the composition is skewed to basic and acidic residues.

This sequence belongs to the Di19 family.

The protein is Protein DEHYDRATION-INDUCED 19 homolog 2 (DI19-2) of Oryza sativa subsp. japonica (Rice).